The following is a 263-amino-acid chain: GTP cyclohydrolase 1 type 2 homolog (263 aa).

A divalent metal cation contacts are provided by H76, H77, D113, H231, and E235.

The protein belongs to the GTP cyclohydrolase I type 2/NIF3 family. Homohexamer.

The chain is GTP cyclohydrolase 1 type 2 homolog from Deinococcus radiodurans (strain ATCC 13939 / DSM 20539 / JCM 16871 / CCUG 27074 / LMG 4051 / NBRC 15346 / NCIMB 9279 / VKM B-1422 / R1).